Consider the following 219-residue polypeptide: Non-specific lipid transfer protein GPI-anchored 25 (219 aa).

Positions 1–22 (MATKITGVFILILTITFSSSSA) are cleaved as a signal peptide. 4 disulfides stabilise this stretch: Cys-39-Cys-85, Cys-49-Cys-68, Cys-69-Cys-110, and Cys-83-Cys-123. Asn-59 carries N-linked (GlcNAc...) asparagine glycosylation. Asn-148 carries N-linked (GlcNAc...) asparagine glycosylation. Positions 152–181 (SPQSVDLAPEVSPSSDLFSPETATLAPPPP) are disordered. Ser-192 carries the GPI-anchor amidated serine lipid modification. A propeptide spans 193-219 (SDSLKIRNFWFPSTIIMTFATSILARI) (removed in mature form).

The protein belongs to the plant LTP family.

It localises to the cell membrane. In terms of biological role, probable lipid transfer protein. The polypeptide is Non-specific lipid transfer protein GPI-anchored 25 (Arabidopsis thaliana (Mouse-ear cress)).